Reading from the N-terminus, the 368-residue chain is Uroporphyrinogen decarboxylase (368 aa).

Residues 41–45, Asp-91, Tyr-168, Ser-223, and His-345 each bind substrate; that span reads RQAGR.

This sequence belongs to the uroporphyrinogen decarboxylase family. In terms of assembly, homodimer.

The protein localises to the cytoplasm. The catalysed reaction is uroporphyrinogen III + 4 H(+) = coproporphyrinogen III + 4 CO2. Its pathway is porphyrin-containing compound metabolism; protoporphyrin-IX biosynthesis; coproporphyrinogen-III from 5-aminolevulinate: step 4/4. Catalyzes the decarboxylation of four acetate groups of uroporphyrinogen-III to yield coproporphyrinogen-III. The chain is Uroporphyrinogen decarboxylase from Psychrobacter sp. (strain PRwf-1).